A 437-amino-acid polypeptide reads, in one-letter code: ATP-dependent protease ATPase subunit HslU (437 aa).

Residues Val18, 60-65 (GVGKTE), Asp250, Glu315, and Arg387 each bind ATP.

It belongs to the ClpX chaperone family. HslU subfamily. As to quaternary structure, a double ring-shaped homohexamer of HslV is capped on each side by a ring-shaped HslU homohexamer. The assembly of the HslU/HslV complex is dependent on binding of ATP.

Its subcellular location is the cytoplasm. ATPase subunit of a proteasome-like degradation complex; this subunit has chaperone activity. The binding of ATP and its subsequent hydrolysis by HslU are essential for unfolding of protein substrates subsequently hydrolyzed by HslV. HslU recognizes the N-terminal part of its protein substrates and unfolds these before they are guided to HslV for hydrolysis. This Desulfovibrio desulfuricans (strain ATCC 27774 / DSM 6949 / MB) protein is ATP-dependent protease ATPase subunit HslU.